The sequence spans 238 residues: Ribosomal RNA large subunit methyltransferase E (238 aa).

S-adenosyl-L-methionine-binding residues include G85, W87, D113, D129, and D153. The active-site Proton acceptor is K193.

It belongs to the class I-like SAM-binding methyltransferase superfamily. RNA methyltransferase RlmE family.

The protein resides in the cytoplasm. The enzyme catalyses uridine(2552) in 23S rRNA + S-adenosyl-L-methionine = 2'-O-methyluridine(2552) in 23S rRNA + S-adenosyl-L-homocysteine + H(+). In terms of biological role, specifically methylates the uridine in position 2552 of 23S rRNA at the 2'-O position of the ribose in the fully assembled 50S ribosomal subunit. In Ruegeria sp. (strain TM1040) (Silicibacter sp.), this protein is Ribosomal RNA large subunit methyltransferase E.